The chain runs to 84 residues: Small ribosomal subunit protein uS17 (84 aa).

This sequence belongs to the universal ribosomal protein uS17 family. Part of the 30S ribosomal subunit.

In terms of biological role, one of the primary rRNA binding proteins, it binds specifically to the 5'-end of 16S ribosomal RNA. This is Small ribosomal subunit protein uS17 from Borreliella burgdorferi (strain ATCC 35210 / DSM 4680 / CIP 102532 / B31) (Borrelia burgdorferi).